Consider the following 82-residue polypeptide: Penaeidin-3i (82 aa).

Residues 1-19 (MRLVVCLVFLASFALVCQG) form the signal peptide. Residue Gln20 is modified to Pyrrolidone carboxylic acid. 2 disulfide bridges follow: Cys55/Cys73 and Cys67/Cys74. Residue Ser81 is modified to Serine amide.

The protein belongs to the penaeidin family.

The protein resides in the cytoplasmic granule. Its function is as follows. Antibacterial and antifungal activity. Presents chitin-binding activity. The protein is Penaeidin-3i of Penaeus vannamei (Whiteleg shrimp).